Reading from the N-terminus, the 94-residue chain is Small ribosomal subunit protein uS19c (94 aa).

Belongs to the universal ribosomal protein uS19 family.

The protein resides in the plastid. Functionally, protein S19 forms a complex with S13 that binds strongly to the 16S ribosomal RNA. The protein is Small ribosomal subunit protein uS19c (rps19) of Epifagus virginiana (Beechdrops).